The sequence spans 343 residues: MEKNKALDAALAQIERAFGKGSIMRMGSRSESEAIDVISTGSLGLDLALGIGGLPRGRVIEIYGPESSGKTTLALHAVAEAQKRGGTCAFVDAEHALDPIYARKLGVDVDNLLISQPDTGEQALEIADTLVRSGAIDVLVVDSVAALVPRAELEGEMGDSHVGLHARLMSQALRKLTGSISRSKTLVIFLNQIRLKIGVMFGNPETTTGGNALKFYASIRMDIRRIGSIKDREEVTGNQTRVKVVKNKLAPPFRQVEFDIMYGEGISKVGELLDLGVKAGIVEKSGAWFSCDSQRIGQGRENAKQFLRDNPDVAASIEQRIRAQANLVEAAMITDETETEAAD.

An ATP-binding site is contributed by 64–71 (GPESSGKT).

This sequence belongs to the RecA family.

It localises to the cytoplasm. Its function is as follows. Can catalyze the hydrolysis of ATP in the presence of single-stranded DNA, the ATP-dependent uptake of single-stranded DNA by duplex DNA, and the ATP-dependent hybridization of homologous single-stranded DNAs. It interacts with LexA causing its activation and leading to its autocatalytic cleavage. The protein is Protein RecA of Acidiphilium cryptum (strain JF-5).